The primary structure comprises 930 residues: Translation initiation factor IF-2 (930 aa).

The interval 51–325 (PGAGKSAAKP…TREIGGVKVP (275 aa)) is disordered. Composition is skewed to low complexity over residues 56-111 (SAAK…KPGV) and 121-162 (TPAA…GNNP). Gly residues predominate over residues 263–295 (RPGGGPGGGPGRPGGPGGRGGRGNAQGAFGRGG). The segment covering 296–307 (GPRKGRKSKRAK) has biased composition (basic residues). A compositionally biased stretch (basic and acidic residues) spans 308–320 (RQEFEQQHTREIG). One can recognise a tr-type G domain in the interval 422 to 596 (PRPAVVTVMG…LTADAALELT (175 aa)). Residues 431–438 (GHVDHGKT) form a G1 region. Position 431 to 438 (431 to 438 (GHVDHGKT)) interacts with GTP. The interval 456–460 (GITQH) is G2. Positions 481–484 (DTPG) are G3. GTP contacts are provided by residues 481-485 (DTPGH) and 535-538 (NKID). Residues 535–538 (NKID) form a G4 region. Positions 571-573 (SAR) are G5.

The protein belongs to the TRAFAC class translation factor GTPase superfamily. Classic translation factor GTPase family. IF-2 subfamily.

Its subcellular location is the cytoplasm. Its function is as follows. One of the essential components for the initiation of protein synthesis. Protects formylmethionyl-tRNA from spontaneous hydrolysis and promotes its binding to the 30S ribosomal subunits. Also involved in the hydrolysis of GTP during the formation of the 70S ribosomal complex. The sequence is that of Translation initiation factor IF-2 from Micrococcus luteus (strain ATCC 4698 / DSM 20030 / JCM 1464 / CCM 169 / CCUG 5858 / IAM 1056 / NBRC 3333 / NCIMB 9278 / NCTC 2665 / VKM Ac-2230) (Micrococcus lysodeikticus).